A 246-amino-acid chain; its full sequence is 1-(5-phosphoribosyl)-5-[(5-phosphoribosylamino)methylideneamino] imidazole-4-carboxamide isomerase (246 aa).

Residue aspartate 8 is the Proton acceptor of the active site. The Proton donor role is filled by aspartate 130.

The protein belongs to the HisA/HisF family.

It is found in the cytoplasm. It catalyses the reaction 1-(5-phospho-beta-D-ribosyl)-5-[(5-phospho-beta-D-ribosylamino)methylideneamino]imidazole-4-carboxamide = 5-[(5-phospho-1-deoxy-D-ribulos-1-ylimino)methylamino]-1-(5-phospho-beta-D-ribosyl)imidazole-4-carboxamide. The protein operates within amino-acid biosynthesis; L-histidine biosynthesis; L-histidine from 5-phospho-alpha-D-ribose 1-diphosphate: step 4/9. This chain is 1-(5-phosphoribosyl)-5-[(5-phosphoribosylamino)methylideneamino] imidazole-4-carboxamide isomerase, found in Halorhodospira halophila (strain DSM 244 / SL1) (Ectothiorhodospira halophila (strain DSM 244 / SL1)).